Reading from the N-terminus, the 298-residue chain is Nitrogenase iron protein (298 aa).

G13 to S20 provides a ligand contact to ATP. C101 serves as a coordination point for [4Fe-4S] cluster. R104 is subject to ADP-ribosylarginine; by dinitrogenase reductase ADP-ribosyltransferase. C135 is a [4Fe-4S] cluster binding site.

It belongs to the NifH/BchL/ChlL family. In terms of assembly, homodimer. The cofactor is [4Fe-4S] cluster. The reversible ADP-ribosylation of Arg-104 inactivates the nitrogenase reductase and regulates nitrogenase activity.

It carries out the reaction N2 + 8 reduced [2Fe-2S]-[ferredoxin] + 16 ATP + 16 H2O = H2 + 8 oxidized [2Fe-2S]-[ferredoxin] + 2 NH4(+) + 16 ADP + 16 phosphate + 6 H(+). In terms of biological role, the key enzymatic reactions in nitrogen fixation are catalyzed by the nitrogenase complex, which has 2 components: the iron protein and the molybdenum-iron protein. The polypeptide is Nitrogenase iron protein (Cyanothece sp. (strain PCC 7425 / ATCC 29141)).